A 131-amino-acid polypeptide reads, in one-letter code: Arsenate reductase 2 (131 aa).

Catalysis depends on nucleophile residues Cys-10, Cys-82, and Cys-89. 2 disulfides stabilise this stretch: Cys-10–Cys-82 and Cys-82–Cys-89.

Belongs to the low molecular weight phosphotyrosine protein phosphatase family. Thioredoxin-coupled ArsC subfamily.

It is found in the cytoplasm. The enzyme catalyses arsenate + [thioredoxin]-dithiol + H(+) = arsenite + [thioredoxin]-disulfide + H2O. Its function is as follows. Catalyzes the reduction of arsenate [As(V)] to arsenite [As(III)]. This chain is Arsenate reductase 2, found in Staphylococcus saprophyticus subsp. saprophyticus (strain ATCC 15305 / DSM 20229 / NCIMB 8711 / NCTC 7292 / S-41).